The sequence spans 231 residues: Demethylmenaquinone methyltransferase (231 aa).

Residues Thr-62, Asp-80, 102 to 103 (DA), and Ser-119 each bind S-adenosyl-L-methionine.

This sequence belongs to the class I-like SAM-binding methyltransferase superfamily. MenG/UbiE family.

The enzyme catalyses a 2-demethylmenaquinol + S-adenosyl-L-methionine = a menaquinol + S-adenosyl-L-homocysteine + H(+). It functions in the pathway quinol/quinone metabolism; menaquinone biosynthesis; menaquinol from 1,4-dihydroxy-2-naphthoate: step 2/2. Functionally, methyltransferase required for the conversion of demethylmenaquinol (DMKH2) to menaquinol (MKH2). This Streptomyces avermitilis (strain ATCC 31267 / DSM 46492 / JCM 5070 / NBRC 14893 / NCIMB 12804 / NRRL 8165 / MA-4680) protein is Demethylmenaquinone methyltransferase.